A 293-amino-acid polypeptide reads, in one-letter code: tRNA pseudouridine synthase B (293 aa).

Asp39 serves as the catalytic Nucleophile.

It belongs to the pseudouridine synthase TruB family. Type 1 subfamily.

It carries out the reaction uridine(55) in tRNA = pseudouridine(55) in tRNA. Its function is as follows. Responsible for synthesis of pseudouridine from uracil-55 in the psi GC loop of transfer RNAs. The chain is tRNA pseudouridine synthase B from Streptococcus mutans serotype c (strain ATCC 700610 / UA159).